We begin with the raw amino-acid sequence, 1175 residues long: Tyrosine-protein phosphatase non-receptor type 21 (1175 aa).

The FERM domain occupies 23–308 (LVARIQLLNN…ARHKFYRLNQ (286 aa)). A compositionally biased stretch (polar residues) spans 395–421 (YSAHSTNSLNTPQPYLQPSPMSSNPSI). The tract at residues 395 to 445 (YSAHSTNSLNTPQPYLQPSPMSSNPSIPGSDVMRPDYIPSHRHSALIPPSY) is disordered. Phosphoserine is present on residues S577, S589, S590, S637, S673, S710, S711, S798, S800, and S805. Positions 663–702 (DVAPRTFSAGSQSSVFSDKVKQEGTEEQGSGGYSHKKSLS) are disordered. One can recognise a Tyrosine-protein phosphatase domain in the interval 897 to 1168 (VFTEYERILK…TFVYRVLIQF (272 aa)). Residues E1068, 1109–1115 (CSAGVGR), and Q1153 each bind substrate. The active-site Phosphocysteine intermediate is the C1109.

This sequence belongs to the protein-tyrosine phosphatase family. Non-receptor class subfamily. Particularly abundantly in adrenal glands.

It localises to the cytoplasm. Its subcellular location is the cytoskeleton. The enzyme catalyses O-phospho-L-tyrosyl-[protein] + H2O = L-tyrosyl-[protein] + phosphate. In Rattus norvegicus (Rat), this protein is Tyrosine-protein phosphatase non-receptor type 21 (Ptpn21).